The chain runs to 218 residues: Large ribosomal subunit protein uL3 (218 aa).

The protein belongs to the universal ribosomal protein uL3 family. As to quaternary structure, part of the 50S ribosomal subunit. Forms a cluster with proteins L14 and L19.

One of the primary rRNA binding proteins, it binds directly near the 3'-end of the 23S rRNA, where it nucleates assembly of the 50S subunit. The polypeptide is Large ribosomal subunit protein uL3 (Corynebacterium jeikeium (strain K411)).